A 676-amino-acid chain; its full sequence is Methionine--tRNA ligase (676 aa).

The short motif at 15–25 (PYANGSIHLGH) is the 'HIGH' region element. Zn(2+)-binding residues include C146, C149, C159, and C162. Positions 332–336 (KMSKS) match the 'KMSKS' region motif. K335 provides a ligand contact to ATP. The tRNA-binding domain occupies 574–676 (DFAKVDMRIA…SGAQPGMQVK (103 aa)).

It belongs to the class-I aminoacyl-tRNA synthetase family. MetG type 1 subfamily. As to quaternary structure, homodimer. Requires Zn(2+) as cofactor.

It localises to the cytoplasm. The enzyme catalyses tRNA(Met) + L-methionine + ATP = L-methionyl-tRNA(Met) + AMP + diphosphate. Is required not only for elongation of protein synthesis but also for the initiation of all mRNA translation through initiator tRNA(fMet) aminoacylation. The protein is Methionine--tRNA ligase of Pectobacterium atrosepticum (strain SCRI 1043 / ATCC BAA-672) (Erwinia carotovora subsp. atroseptica).